The chain runs to 315 residues: Putative heme-binding peroxidase (315 aa).

The Proton acceptor role is filled by His-40. His-169 contacts heme b. Trp-185 functions as the Tryptophan radical intermediate in the catalytic mechanism. Residues 267–286 are disordered; that stretch reads EEGKPLDKTAPPAGDETCPV.

The protein belongs to the peroxidase family. Cytochrome c peroxidase subfamily. Heme b is required as a cofactor.

Functionally, destroys radicals which are normally produced within the cells and which are toxic to biological systems. The polypeptide is Putative heme-binding peroxidase (Cryptococcus neoformans var. neoformans serotype D (strain B-3501A) (Filobasidiella neoformans)).